Consider the following 57-residue polypeptide: MAVPFRRTSKAKKRKRRTHVKLQLPGMNECSNCGEYRLSHHVCPECGQYDGKDVANS.

It belongs to the bacterial ribosomal protein bL32 family.

The sequence is that of Large ribosomal subunit protein bL32B (rpmF2) from Listeria innocua serovar 6a (strain ATCC BAA-680 / CLIP 11262).